Reading from the N-terminus, the 597-residue chain is Cysteine/serine-rich nuclear protein 3 (597 aa).

Disordered regions lie at residues 22–64 (EDVD…TPSS) and 348–407 (CQGD…GFVE). Low complexity predominate over residues 42–52 (SSESADSGDSV). Residues 53 to 64 (NPSTSNHFTPSS) are compositionally biased toward polar residues. Residues 348 to 359 (CQGDEEEEEEDG) show a composition bias toward acidic residues. Positions 361 to 376 (SFCSGATDSSTQSLAP) are enriched in polar residues. Acidic residues predominate over residues 378 to 401 (ESDEEEEEEEEEEEEEEEDDDDDK).

This sequence belongs to the AXUD1 family. Detected only in the brain of 15 dpc, 18 dpc, newborn and P6 mice (at protein level).

The protein localises to the nucleus. In terms of biological role, binds to the consensus sequence 5'-AGAGTG-3' and has transcriptional activator activity. Plays a role in apoptosis. The protein is Cysteine/serine-rich nuclear protein 3 (Csrnp3) of Mus musculus (Mouse).